A 291-amino-acid polypeptide reads, in one-letter code: ATP synthase gamma chain (291 aa).

It belongs to the ATPase gamma chain family. F-type ATPases have 2 components, CF(1) - the catalytic core - and CF(0) - the membrane proton channel. CF(1) has five subunits: alpha(3), beta(3), gamma(1), delta(1), epsilon(1). CF(0) has three main subunits: a, b and c.

The protein resides in the cell inner membrane. Produces ATP from ADP in the presence of a proton gradient across the membrane. The gamma chain is believed to be important in regulating ATPase activity and the flow of protons through the CF(0) complex. This is ATP synthase gamma chain from Pelagibacter ubique (strain HTCC1062).